The primary structure comprises 255 residues: tRNA (guanine-N(1)-)-methyltransferase (255 aa).

S-adenosyl-L-methionine is bound by residues Gly113 and 133–138 (IGDYVL).

Belongs to the RNA methyltransferase TrmD family. As to quaternary structure, homodimer.

It localises to the cytoplasm. It carries out the reaction guanosine(37) in tRNA + S-adenosyl-L-methionine = N(1)-methylguanosine(37) in tRNA + S-adenosyl-L-homocysteine + H(+). Specifically methylates guanosine-37 in various tRNAs. This is tRNA (guanine-N(1)-)-methyltransferase from Salmonella schwarzengrund (strain CVM19633).